The chain runs to 406 residues: Arginine biosynthesis bifunctional protein ArgJ (406 aa).

Residues Thr-156, Lys-182, Thr-193, Glu-279, Asn-401, and Thr-406 each contribute to the substrate site. The active-site Nucleophile is the Thr-193.

It belongs to the ArgJ family. As to quaternary structure, heterotetramer of two alpha and two beta chains.

Its subcellular location is the cytoplasm. The enzyme catalyses N(2)-acetyl-L-ornithine + L-glutamate = N-acetyl-L-glutamate + L-ornithine. It carries out the reaction L-glutamate + acetyl-CoA = N-acetyl-L-glutamate + CoA + H(+). Its pathway is amino-acid biosynthesis; L-arginine biosynthesis; L-ornithine and N-acetyl-L-glutamate from L-glutamate and N(2)-acetyl-L-ornithine (cyclic): step 1/1. The protein operates within amino-acid biosynthesis; L-arginine biosynthesis; N(2)-acetyl-L-ornithine from L-glutamate: step 1/4. With respect to regulation, feedback inhibition by L-arginine. Functionally, catalyzes two activities which are involved in the cyclic version of arginine biosynthesis: the synthesis of N-acetylglutamate from glutamate and acetyl-CoA as the acetyl donor, and of ornithine by transacetylation between N(2)-acetylornithine and glutamate. The sequence is that of Arginine biosynthesis bifunctional protein ArgJ from Bacillus amyloliquefaciens (Bacillus velezensis).